The sequence spans 487 residues: Catalase (487 aa).

Positions 1 to 20 (MSQRVLTTESGAPVADNQNS) are disordered. Residues histidine 54 and asparagine 127 contribute to the active site. Tyrosine 337 lines the heme pocket.

It belongs to the catalase family. Heme serves as cofactor.

It carries out the reaction 2 H2O2 = O2 + 2 H2O. Decomposes hydrogen peroxide into water and oxygen; serves to protect cells from the toxic effects of hydrogen peroxide. This is Catalase (katA) from Streptomyces coelicolor (strain ATCC BAA-471 / A3(2) / M145).